A 62-amino-acid polypeptide reads, in one-letter code: Protein DsrB (62 aa).

The protein belongs to the DsrB family.

The polypeptide is Protein DsrB (Citrobacter koseri (strain ATCC BAA-895 / CDC 4225-83 / SGSC4696)).